The chain runs to 193 residues: Transforming protein RhoA (193 aa).

Residues Gly-12 to Thr-19 and Phe-30 to Thr-37 contribute to the GTP site. Positions Tyr-34–Tyr-42 match the Effector region motif. Position 41 is a (Microbial infection) ADP-ribosylasparagine; by botulinum toxin (Asn-41). GTP is bound by residues Asp-59–Gln-63 and Asn-117–Asp-120. Residues Ala-61 to Asp-78 are switch II region; involved in RAP1GDS1 isoform 2 binding. Gln-63 carries the 5-glutamyl serotonin modification. Lys-135 participates in a covalent cross-link: Glycyl lysine isopeptide (Lys-Gly) (interchain with G-Cter in ubiquitin). Residue Ser-160–Lys-162 coordinates GTP. Phosphoserine; by PKG/PRKG1 is present on Ser-188. Cys-190 carries the post-translational modification Cysteine methyl ester. Cys-190 carries S-geranylgeranyl cysteine lipidation. Residues Leu-191–Leu-193 constitute a propeptide, removed in mature form.

Belongs to the small GTPase superfamily. Rho family. Interacts with ARHGEF28. Interacts (via GTP-bound form) with RIPOR1 (via N-terminus); this interaction links RHOA to STK24 and STK26 kinases. Interacts with RIPOR2 (via active GTP- or inactive GDP-bound forms) isoform 1 and isoform 2; these interactions are direct, block the loading of GTP to RHOA and decrease upon chemokine CCL19 stimulation in primary T lymphocytes. Binds PRKCL1, ROCK1 and ROCK2. Interacts with ARHGEF2, ARHGEF3, NET1 and RTKN. Interacts with PLCE1 and AKAP13. Interacts with DIAPH1. Interacts (in the constitutively activated, GTP-bound form) with DGKQ. Interacts with RACK1; enhances RHOA activation. Interacts with PKP4; the interaction is detected at the midbody. Interacts (GTP-bound form preferentially) with PKN2; the interaction stimulates autophosphorylation and phosphorylation of PKN2. Interacts with ARHGDIA; this interaction inactivates and stabilizes RHOA. Interacts with ARHGDIB. Interacts (GTP-bound form) with KCNA2 (via cytoplasmic N-terminal domain). Interacts (GTP-bound form) with ECT2; the interaction results in allosteric activation of ECT2. Interacts with RAP1GDS1; the interaction is direct and in a 1:1 stoichiometry. Requires Mg(2+) as cofactor. In terms of processing, phosphorylation by PRKG1 at Ser-188 inactivates RHOA signaling. Phosphorylation by SLK at Ser-188 in response to AGTR2 activation. Ubiquitinated by the BCR(KCTD13) and BCR(TNFAIP1) E3 ubiquitin ligase complexes, leading to its degradation by the proteasome, thereby regulating the actin cytoskeleton and synaptic transmission in neurons. Ubiquitinated at Lys-135 in a FBXL19-mediated manner; leading to proteasomal degradation. Post-translationally, serotonylation of Gln-63 by TGM2 during activation and aggregation of platelets leads to constitutive activation of GTPase activity.

Its subcellular location is the cell membrane. The protein localises to the cytoplasm. It localises to the cytoskeleton. It is found in the cleavage furrow. The protein resides in the cell cortex. Its subcellular location is the midbody. The protein localises to the cell projection. It localises to the lamellipodium. It is found in the dendrite. The protein resides in the nucleus. It carries out the reaction GTP + H2O = GDP + phosphate + H(+). Regulated by guanine nucleotide exchange factors (GEFs) which promote the exchange of bound GDP for free GTP, GTPase activating proteins (GAPs) which increase the GTP hydrolysis activity and GDP dissociation inhibitors which inhibit the dissociation of the nucleotide from the GTPase. Activated by GEFs such as ARHGEF2, ARHGEF3, ARHGEF28 and BCR. Inhibited by GAPs such as ARHGAP30. Inhibited by GDP dissociation inhibitors such as ARHGDIA. Small GTPase which cycles between an active GTP-bound and an inactive GDP-bound state. Mainly associated with cytoskeleton organization, in active state binds to a variety of effector proteins to regulate cellular responses such as cytoskeletal dynamics, cell migration and cell cycle. Regulates a signal transduction pathway linking plasma membrane receptors to the assembly of focal adhesions and actin stress fibers. Involved in a microtubule-dependent signal that is required for the myosin contractile ring formation during cell cycle cytokinesis. Plays an essential role in cleavage furrow formation. Required for the apical junction formation of keratinocyte cell-cell adhesion. Essential for the SPATA13-mediated regulation of cell migration and adhesion assembly and disassembly. The MEMO1-RHOA-DIAPH1 signaling pathway plays an important role in ERBB2-dependent stabilization of microtubules at the cell cortex. It controls the localization of APC and CLASP2 to the cell membrane, via the regulation of GSK3B activity. In turn, membrane-bound APC allows the localization of the MACF1 to the cell membrane, which is required for microtubule capture and stabilization. Regulates KCNA2 potassium channel activity by reducing its location at the cell surface in response to CHRM1 activation; promotes KCNA2 endocytosis. Acts as an allosteric activator of guanine nucleotide exchange factor ECT2 by binding in its activated GTP-bound form to the PH domain of ECT2 which stimulates the release of PH inhibition and promotes the binding of substrate RHOA to the ECT2 catalytic center. May be an activator of PLCE1. In neurons, involved in the inhibition of the initial spine growth. Upon activation by CaMKII, modulates dendritic spine structural plasticity by relaying CaMKII transient activation to synapse-specific, long-term signaling. Acts as a regulator of platelet alpha-granule release during activation and aggregation of platelets. When activated by DAAM1 may signal centrosome maturation and chromosomal segregation during cell division. May also be involved in contractile ring formation during cytokinesis. This chain is Transforming protein RhoA (RHOA), found in Bos taurus (Bovine).